The chain runs to 164 residues: Type II secretion system protein M (164 aa).

Topologically, residues 1–17 (MNELRQRWQAMSQRERQ) are cytoplasmic. The helical transmembrane segment at 18–38 (LMVVCAAVLLLCVVYYAILQP) threads the bilayer. Residues 39-164 (WQEREDLWER…RLMLERTDEA (126 aa)) lie on the Periplasmic side of the membrane.

The protein belongs to the GSP M family. In terms of assembly, type II secretion system is composed of four main components: the outer membrane complex, the inner membrane complex, the cytoplasmic secretion ATPase and the periplasm-spanning pseudopilus. Forms homodimers. Interacts with OutL/GspL. Interacts with OutE/GspE and OutF/GspF.

The protein localises to the cell inner membrane. Its function is as follows. Inner membrane component of the type II secretion system required for the energy-dependent secretion of extracellular factors such as proteases and toxins from the periplasm. Plays a role in the complex assembly and recruits OutL resulting in a stable complex in the inner membrane. Provides thus a link between the energy-providing OutE protein in the cytoplasm and the rest of the T2SS machinery. The chain is Type II secretion system protein M (outM) from Pectobacterium carotovorum subsp. carotovorum (Erwinia carotovora subsp. carotovora).